The following is a 450-amino-acid chain: UDP-N-acetylmuramoylalanine--D-glutamate ligase (450 aa).

Gly119–Thr125 serves as a coordination point for ATP.

This sequence belongs to the MurCDEF family.

Its subcellular location is the cytoplasm. The enzyme catalyses UDP-N-acetyl-alpha-D-muramoyl-L-alanine + D-glutamate + ATP = UDP-N-acetyl-alpha-D-muramoyl-L-alanyl-D-glutamate + ADP + phosphate + H(+). It functions in the pathway cell wall biogenesis; peptidoglycan biosynthesis. In terms of biological role, cell wall formation. Catalyzes the addition of glutamate to the nucleotide precursor UDP-N-acetylmuramoyl-L-alanine (UMA). This Streptococcus pneumoniae (strain CGSP14) protein is UDP-N-acetylmuramoylalanine--D-glutamate ligase.